Consider the following 320-residue polypeptide: NADH-ubiquinone oxidoreductase chain 1 (320 aa).

The next 8 membrane-spanning stretches (helical) occupy residues 3 to 23 (LITIINPLTYIVPILIAVAFL), 72 to 92 (ILLILSPVLALTMAMLIWTPI), 103 to 123 (LGFLSILAISSMAVNSILWAG), 147 to 167 (VTLGIILLSILILTGGFTMQL), 174 to 194 (HIWLLATSWPLMMMWFISTLA), 226 to 246 (FFLAEYANIISMNLLTCILFI), 255 to 275 (ELFLINLITKTMILTLTFLWI), and 295 to 315 (FLPLTMALCLLHVSLLISISG).

This sequence belongs to the complex I subunit 1 family.

It localises to the mitochondrion inner membrane. It catalyses the reaction a ubiquinone + NADH + 5 H(+)(in) = a ubiquinol + NAD(+) + 4 H(+)(out). Its function is as follows. Core subunit of the mitochondrial membrane respiratory chain NADH dehydrogenase (Complex I) that is believed to belong to the minimal assembly required for catalysis. Complex I functions in the transfer of electrons from NADH to the respiratory chain. The immediate electron acceptor for the enzyme is believed to be ubiquinone. The chain is NADH-ubiquinone oxidoreductase chain 1 (MT-ND1) from Varanus jobiensis (Peach throat monitor).